The following is a 339-amino-acid chain: Cilia- and flagella-associated protein 36 (339 aa).

Coiled coils occupy residues 142–188 (ISDL…ENKQ) and 255–330 (NLSQ…EVIL). Disordered stretches follow at residues 177 to 212 (NLTL…EKQP) and 281 to 318 (KKQE…QRRK). Residues 187 to 200 (KQSSGSERTPNNTE) show a composition bias toward polar residues. Over residues 281-313 (KKQESKKMAQNSEEHEEKATCSKQEMTEEEKKS) the composition is skewed to basic and acidic residues.

The protein belongs to the CFAP36 family.

It localises to the nucleus. The protein localises to the cytoplasm. The protein resides in the cell projection. It is found in the cilium. Its subcellular location is the flagellum. In Xenopus tropicalis (Western clawed frog), this protein is Cilia- and flagella-associated protein 36.